A 450-amino-acid chain; its full sequence is MSLLQFSGLFVVWLLCTLFIATLTWFEFRRVRFNFNVFFSLLFLLTFFFGFPLTSVLVFRFDVGVAPPEILLQALLSAGCFYAVYYVTYKTRLRKRVADVPRRPLFTMNRVETNLTWVILMGIALVSVGIFFMHNGFLLFRLNSYSQIFSSEVSGVALKRFFYFFIPAMLVVYFLRQDSKAWLFFLVSTVAFGLLTYMIVGGTRANIIIAFAIFLFIGIIRGWISLWMLAAAGVLGIVGMFWLALKRYGMNVSGDEAFYTFLYLTRDTFSPWENLALLLQNYDNIDFQGLAPIVRDFYVFIPSWLWPGRPSMVLNSANYFTREVLNNHSGLAISPTLIGSLVVMGGALFIPLGAIVVGLIIKWFDWLYELGNREPNRYKAAILHSFCFGAIFNMIVLAREGLDSFVSRVVFFIVVFGACLMIAKLLYWLFESAGLIHKRTKSSLRTQVEG.

A run of 11 helical transmembrane segments spans residues 6–26 (FSGLFVVWLLCTLFIATLTWF), 37–57 (VFFSLLFLLTFFFGFPLTSVL), 63–83 (VGVAPPEILLQALLSAGCFYA), 118–138 (VILMGIALVSVGIFFMHNGFL), 155–175 (GVALKRFFYFFIPAMLVVYFL), 181–201 (AWLFFLVSTVAFGLLTYMIVG), 207–227 (IIIAFAIFLFIGIIRGWISLW), 228–248 (MLAAAGVLGIVGMFWLALKRY), 341–361 (LVVMGGALFIPLGAIVVGLII), 378–398 (YKAAILHSFCFGAIFNMIVLA), and 410–430 (VFFIVVFGACLMIAKLLYWLF).

It belongs to the WzyE family. In terms of assembly, probably part of a complex composed of WzxE, WzyE and WzzE.

It localises to the cell inner membrane. It participates in bacterial outer membrane biogenesis; enterobacterial common antigen biosynthesis. Probably involved in the polymerization of enterobacterial common antigen (ECA) trisaccharide repeat units. The sequence is that of Probable ECA polymerase from Shigella boydii serotype 18 (strain CDC 3083-94 / BS512).